Here is a 224-residue protein sequence, read N- to C-terminus: Peptidyl-prolyl cis-trans isomerase FKBP3 (224 aa).

Alanine 2 bears the N-acetylalanine mark. Residue serine 36 is modified to Phosphoserine. Residues lysine 89 to glutamate 102 show a composition bias toward basic and acidic residues. Positions lysine 89–lysine 113 are disordered. Lysine 99 is modified (N6-acetyllysine). Residues glycine 128–aspartate 224 form the PPIase FKBP-type domain. Serine 152 bears the Phosphoserine mark. An N6-acetyllysine modification is found at lysine 170.

It belongs to the FKBP-type PPIase family.

It localises to the nucleus. It catalyses the reaction [protein]-peptidylproline (omega=180) = [protein]-peptidylproline (omega=0). Inhibited preferentially by rapamycin over FK506. FK506- and rapamycin-binding proteins (FKBPs) constitute a family of receptors for the two immunosuppressants which inhibit T-cell proliferation by arresting two dinstinct cytoplasmic signal transmission pathways. PPIases accelerate the folding of proteins. The polypeptide is Peptidyl-prolyl cis-trans isomerase FKBP3 (FKBP3) (Bos taurus (Bovine)).